A 282-amino-acid chain; its full sequence is BURP domain-containing protein BNM2A (282 aa).

A signal peptide spans 1-26 (MASLRFSVTFPALLSLLLLSLWVVEA). The 223-residue stretch at 60-282 (FFKISDLKLG…PLDNIVWVSK (223 aa)) folds into the BURP domain.

In terms of tissue distribution, expressed in the radicle and cotyledon of germinating seeds 2 days post-imbibition (DPI), in stems and roots of 30-DPI young plants and in floral buds, but not in fully open flowers or leaves. Expressed in the embryo and seed coat tissues of developing seeds. The protein accumulates only in seeds and only long after transcript accumulation becomes evident.

It localises to the protein storage vacuole. The chain is BURP domain-containing protein BNM2A from Brassica napus (Rape).